The following is a 185-amino-acid chain: UPF0397 protein LBA0922 (185 aa).

5 helical membrane passes run 11-31, 45-65, 72-92, 111-131, and 146-166; these read VVAI…TSIP, FLAF…GFIG, IMYG…GWII, IILF…VVAP, and FVQG…IGTI.

Belongs to the UPF0397 family.

It is found in the cell membrane. In Lactobacillus acidophilus (strain ATCC 700396 / NCK56 / N2 / NCFM), this protein is UPF0397 protein LBA0922.